A 337-amino-acid chain; its full sequence is Anthranilate phosphoribosyltransferase (337 aa).

5-phospho-alpha-D-ribose 1-diphosphate-binding positions include G81, 84 to 85 (GD), S89, 91 to 94 (NVST), 109 to 117 (KHGNRAMSS), and A121. Residue G81 coordinates anthranilate. S93 provides a ligand contact to Mg(2+). Position 112 (N112) interacts with anthranilate. R167 contributes to the anthranilate binding site. Positions 226 and 227 each coordinate Mg(2+).

The protein belongs to the anthranilate phosphoribosyltransferase family. In terms of assembly, homodimer. The cofactor is Mg(2+).

The catalysed reaction is N-(5-phospho-beta-D-ribosyl)anthranilate + diphosphate = 5-phospho-alpha-D-ribose 1-diphosphate + anthranilate. The protein operates within amino-acid biosynthesis; L-tryptophan biosynthesis; L-tryptophan from chorismate: step 2/5. Its function is as follows. Catalyzes the transfer of the phosphoribosyl group of 5-phosphorylribose-1-pyrophosphate (PRPP) to anthranilate to yield N-(5'-phosphoribosyl)-anthranilate (PRA). This Afipia carboxidovorans (strain ATCC 49405 / DSM 1227 / KCTC 32145 / OM5) (Oligotropha carboxidovorans) protein is Anthranilate phosphoribosyltransferase.